The chain runs to 423 residues: Glutamine synthetase, chloroplastic (423 aa).

Residues 1 to 51 constitute a chloroplast transit peptide; that stretch reads MAQAVVPAMQCRVGVKAAAGRVWSAGRTRTGRGGASPGFKVMAVSTGSTGV. The GS beta-grasp domain maps to 70 to 150; the sequence is VIAEYIWVGG…VICDTYTPQG (81 aa). A disordered region spans residues 89 to 115; the sequence is RTISKPVEDPSELPKWNYDGSSTGQAP. The GS catalytic domain maps to 154–423; sequence PTNKRHRAAQ…LAAKKLALKV (270 aa).

This sequence belongs to the glutamine synthetase family. In terms of assembly, homooctamer.

The protein resides in the plastid. It localises to the chloroplast. It catalyses the reaction L-glutamate + NH4(+) + ATP = L-glutamine + ADP + phosphate + H(+). The light-modulated chloroplast enzyme, encoded by a nuclear gene and expressed primarily in leaves, is responsible for the reassimilation of the ammonia generated by photorespiration. The sequence is that of Glutamine synthetase, chloroplastic (GLN2) from Zea mays (Maize).